The primary structure comprises 377 residues: tRNA pseudouridine synthase B (377 aa).

The active-site Nucleophile is Asp-53.

Belongs to the pseudouridine synthase TruB family. Type 1 subfamily.

The enzyme catalyses uridine(55) in tRNA = pseudouridine(55) in tRNA. In terms of biological role, responsible for synthesis of pseudouridine from uracil-55 in the psi GC loop of transfer RNAs. The sequence is that of tRNA pseudouridine synthase B from Tropheryma whipplei (strain Twist) (Whipple's bacillus).